Here is a 310-residue protein sequence, read N- to C-terminus: Atrochrysone carboxyl ACP thioesterase CPUR_05436 (310 aa).

The Zn(2+) site is built by H105, H107, D109, and H110. D109 serves as the catalytic Proton donor/acceptor.

This sequence belongs to the metallo-beta-lactamase superfamily. Zn(2+) is required as a cofactor.

It catalyses the reaction atrochrysone carboxyl-[ACP] + H2O = atrochrysone carboxylate + holo-[ACP] + H(+). The protein operates within pigment biosynthesis. Functionally, atrochrysone carboxyl ACP thioesterase; part of the ergochrome gene cluster responsible for the typical purple-black color of the ergot sclerotia. The ergochrome gene cluster produces several ergot pigments including the yellow ergochrome secalonic acid and its derivatives, as well as the red anthraquinones endocrocin and clavorubin. The pathway begins with the synthesis of atrochrysone thioester by the polyketide synthase (PKS) CPUR_05437. The atrochrysone carboxyl ACP thioesterase CPUR_05436 then breaks the thioester bond and releases the atrochrysone carboxylic acid from CPUR_05437. The atrochrysone carboxylic acid is then converted to atrochrysone which is further transformed into emodin anthrone. The next step is performed by the anthrone oxygenase CPUR_05434 that catalyzes the oxidation of emodinanthrone to emodin. Emodin is further modified to yield monodictyphenone via several steps involving CPUR_05427, CPUR_05428, CPUR_05429 and CPUR_05430. The short chain dehydrogenase/reductase CPUR_05418 then catalyzes the C-5 ketoreduction to give the xanthone skeleton of the monomeric units. Ergochromes formation requires further dimerization steps of different xanthone units, probably catalyzed by the cytochrome P450 monooxygenase CPUR_05419. CPUR_05425, CPUR_05426 and CPUR_05431 are unique to Claviceps, thus it is likely that they are involved in further modification of xanthone units or in their dimerization. The yellow ergochromes and the red anthraquinone pigments endocrocin and clavorubin are products from the same PKS derived precursors and the latter are likely shunt products in the pathway of xanthone biosynthesis. It is proposed that atrochrysone carboxylic acid released from the PKS CPUR_05437 can also be converted to endocrocin anthrone which is further oxidized into endocrocin by CPUR_05435. Endocrocin could be then modified to clavorubin, possibly by CPUR_05423 and CPUR_05431. Clavorubin is the principal anthraquinone metabolite produced by the cluster with a much higher yield compared to endocrocin. This chain is Atrochrysone carboxyl ACP thioesterase CPUR_05436, found in Claviceps purpurea (strain 20.1) (Ergot fungus).